A 261-amino-acid polypeptide reads, in one-letter code: Adenosylcobinamide-GDP ribazoletransferase (261 aa).

5 helical membrane-spanning segments follow: residues 12-32 (NLFF…WVVI), 46-66 (LVGL…QLIL), 67-87 (PASI…GAFH), 120-140 (GALS…ELAL), and 199-219 (IFVL…TLWL).

It belongs to the CobS family. Mg(2+) is required as a cofactor.

The protein resides in the cell inner membrane. It catalyses the reaction alpha-ribazole + adenosylcob(III)inamide-GDP = adenosylcob(III)alamin + GMP + H(+). The catalysed reaction is alpha-ribazole 5'-phosphate + adenosylcob(III)inamide-GDP = adenosylcob(III)alamin 5'-phosphate + GMP + H(+). It functions in the pathway cofactor biosynthesis; adenosylcobalamin biosynthesis; adenosylcobalamin from cob(II)yrinate a,c-diamide: step 7/7. Joins adenosylcobinamide-GDP and alpha-ribazole to generate adenosylcobalamin (Ado-cobalamin). Also synthesizes adenosylcobalamin 5'-phosphate from adenosylcobinamide-GDP and alpha-ribazole 5'-phosphate. This Shewanella frigidimarina (strain NCIMB 400) protein is Adenosylcobinamide-GDP ribazoletransferase.